Consider the following 447-residue polypeptide: Adenylosuccinate synthetase (447 aa).

GTP-binding positions include 12–18 and 40–42; these read GDEGKGK and GHT. Aspartate 13 (proton acceptor) is an active-site residue. 2 residues coordinate Mg(2+): aspartate 13 and glycine 40. IMP contacts are provided by residues 13–16, 38–41, threonine 128, arginine 142, glutamine 223, threonine 238, and arginine 302; these read DEGK and NAGH. Histidine 41 serves as the catalytic Proton donor. 298–304 provides a ligand contact to substrate; sequence TTTGRRR. GTP-binding positions include arginine 304, 330 to 332, and 412 to 414; these read KLD and SLG.

Belongs to the adenylosuccinate synthetase family. As to quaternary structure, homodimer. Mg(2+) is required as a cofactor.

The protein localises to the cytoplasm. It catalyses the reaction IMP + L-aspartate + GTP = N(6)-(1,2-dicarboxyethyl)-AMP + GDP + phosphate + 2 H(+). It functions in the pathway purine metabolism; AMP biosynthesis via de novo pathway; AMP from IMP: step 1/2. In terms of biological role, plays an important role in the de novo pathway of purine nucleotide biosynthesis. Catalyzes the first committed step in the biosynthesis of AMP from IMP. The polypeptide is Adenylosuccinate synthetase (Thermosynechococcus vestitus (strain NIES-2133 / IAM M-273 / BP-1)).